Consider the following 248-residue polypeptide: MKRSYDSINECGAYINNAADNICQCKMNRIDSAFGGWLTNLTEVYYCPTHNIYHHCDGDGTCIIVNSVCTRSGTCMGISTLVGVTHDLMDIDSLPAFDRFKLRMMNKGYFWISMQDRLKEELEEAKSGDEGMTMETHFRNKPDVESTLTRLYYYFKRELGMITRGTQESKLEKVYIMFEEMALRLLESRMTNHDKKQKLLAKVSKLISKQNTKSHFTTSVNKLITSDLTYPERIVKPLMDLKLSELYI.

This is an uncharacterized protein from Ostreid herpesvirus 1 (isolate France) (OsHV-1).